The sequence spans 289 residues: MSFVAYEELIKEGDTAILSLGHGAMVAVRVQRGAQTQTRHGVLRHSVDLIGRPFGSKVTCGRGGWVYVLHPTPELWTLNLPHRTQILYSTDIALITMMLELRPGSVVCESGTGSGSVSHAIIRTIAPTGHLHTVEFHQQRAEKAREEFQEHRVGRWVTVRTQDVCRSGFGVSHVADAVFLDIPSPWEAVGHAWDALKVEGGRFCSFSPCIEQVQRTCQALAARGFSELSTLEVLPQVYNVRTVSLPPPDLGTGTDGPAGSDTSPFRSGTPMKEAVGHTGYLTFATKTPG.

N-acetylserine is present on S2. Residues 20–22, 35–42, 64–65, 85–89, and 110–117 each bind substrate; these read LGH, QTQTRHGV, GW, QILYS, and SGTGSGSV. S-adenosyl-L-methionine-binding positions include L87, 114-116, E135, R140, 163-164, and D181; these read SGS and DV. Substrate contacts are provided by residues 180–183 and 205–212; these read LDIP and SFSPCIEQ. The interval 245–272 is disordered; that stretch reads LPPPDLGTGTDGPAGSDTSPFRSGTPMK. Positions 250–259 are enriched in low complexity; it reads LGTGTDGPAG. A Phosphoserine modification is found at S263. Position 278 (T278) interacts with substrate.

Belongs to the class I-like SAM-binding methyltransferase superfamily. TRM61 family. As to quaternary structure, heterotetramer; composed of two copies of TRMT6 and two copies of TRMT61A.

The protein localises to the nucleus. It carries out the reaction adenosine(58) in tRNA + S-adenosyl-L-methionine = N(1)-methyladenosine(58) in tRNA + S-adenosyl-L-homocysteine + H(+). The enzyme catalyses an adenosine in mRNA + S-adenosyl-L-methionine = an N(1)-methyladenosine in mRNA + S-adenosyl-L-homocysteine + H(+). Functionally, catalytic subunit of tRNA (adenine-N(1)-)-methyltransferase, which catalyzes the formation of N(1)-methyladenine at position 58 (m1A58) in initiator methionyl-tRNA. Catalytic subunit of mRNA N(1)-methyltransferase complex, which mediates methylation of adenosine residues at the N(1) position of a small subset of mRNAs: N(1) methylation takes place in tRNA T-loop-like structures of mRNAs and is only present at low stoichiometries. The protein is tRNA (adenine(58)-N(1))-methyltransferase catalytic subunit TRMT61A (TRMT61A) of Homo sapiens (Human).